We begin with the raw amino-acid sequence, 340 residues long: Guanine nucleotide-binding protein G(I)/G(S)/G(T) subunit beta-1 (340 aa).

Ser-2 is subject to N-acetylserine. Ser-2 is modified (phosphoserine). 7 WD repeats span residues 46–94 (RTRR…HAIP), 95–140 (LRSS…RELA), 141–181 (GHTG…TTFT), 182–223 (GHTG…QTFT), 224–267 (GHES…YSHD), 268–309 (NIIC…GVLA), and 310–340 (GHDD…KIWN). Residue His-266 is modified to Phosphohistidine.

It belongs to the WD repeat G protein beta family. G proteins are composed of 3 units, alpha, beta and gamma. The heterodimer formed by GNB1 and GNG2 interacts with ARHGEF5. The heterodimer formed by GNB1 and GNG2 interacts with GRK2. Forms a complex with GNAO1 and GNG3. Interacts with ARHGEF18 and RASD2. Forms complexes with TAS2R14 and G-proteins; these complexes play a role in the perception of bitterness. Component of the TAS2R14-GNAI1 complex, consisting of TAS2R14, GNAI1, GNB1 and GNG2. Component of the TAS2R14-GNAT3 complex, consisting of TAS2R14, GNAT3, GNB1 and GNG2. Component of the TAS2R14-GNAS2 complex, consisting of TAS2R14, GNAS2, GNB1 and GNG2. In terms of processing, phosphorylation at His-266 by NDKB contributes to G protein activation by increasing the high energetic phosphate transfer onto GDP.

Its function is as follows. Guanine nucleotide-binding proteins (G proteins) are involved as a modulator or transducer in various transmembrane signaling systems. The beta and gamma chains are required for the GTPase activity, for replacement of GDP by GTP, and for G protein-effector interaction. This is Guanine nucleotide-binding protein G(I)/G(S)/G(T) subunit beta-1 (GNB1) from Pongo abelii (Sumatran orangutan).